A 555-amino-acid chain; its full sequence is 2-isopropylmalate synthase (555 aa).

The Pyruvate carboxyltransferase domain occupies 30–303 (PIWCSVDLRD…DPGLDCTDIN (274 aa)). Asp-39, His-242, His-244, and Asn-278 together coordinate Mg(2+). Residues 437 to 555 (QPDARIKFVD…VSAANRVIAK (119 aa)) are regulatory domain.

The protein belongs to the alpha-IPM synthase/homocitrate synthase family. LeuA type 2 subfamily. In terms of assembly, homodimer. The cofactor is Mg(2+).

It localises to the cytoplasm. It carries out the reaction 3-methyl-2-oxobutanoate + acetyl-CoA + H2O = (2S)-2-isopropylmalate + CoA + H(+). Its pathway is amino-acid biosynthesis; L-leucine biosynthesis; L-leucine from 3-methyl-2-oxobutanoate: step 1/4. Functionally, catalyzes the condensation of the acetyl group of acetyl-CoA with 3-methyl-2-oxobutanoate (2-ketoisovalerate) to form 3-carboxy-3-hydroxy-4-methylpentanoate (2-isopropylmalate). The protein is 2-isopropylmalate synthase of Brucella melitensis biotype 1 (strain ATCC 23456 / CCUG 17765 / NCTC 10094 / 16M).